We begin with the raw amino-acid sequence, 285 residues long: Protoheme IX farnesyltransferase (285 aa).

9 consecutive transmembrane segments (helical) span residues 13-33 (LGKL…AFLA), 40-60 (LLPI…AMII), 89-109 (EAII…FIDN), 110-130 (ILTA…YTIL), 137-157 (LNIV…YTSL), 165-185 (GFLL…SLAL), 194-214 (AHYP…AIAI), 218-238 (LMIP…LIAF), and 265-285 (FIFS…VKLI).

It belongs to the UbiA prenyltransferase family. Protoheme IX farnesyltransferase subfamily.

The protein localises to the cell membrane. The catalysed reaction is heme b + (2E,6E)-farnesyl diphosphate + H2O = Fe(II)-heme o + diphosphate. Its pathway is porphyrin-containing compound metabolism; heme O biosynthesis; heme O from protoheme: step 1/1. Converts heme B (protoheme IX) to heme O by substitution of the vinyl group on carbon 2 of heme B porphyrin ring with a hydroxyethyl farnesyl side group. The chain is Protoheme IX farnesyltransferase from Saccharolobus islandicus (strain Y.G.57.14 / Yellowstone #1) (Sulfolobus islandicus).